A 282-amino-acid chain; its full sequence is uncharacterized protein (282 aa).

Helical transmembrane passes span 9 to 29 (LLKI…APHG), 43 to 63 (ISGR…FLYA), 123 to 143 (VFVS…LYLV), 158 to 178 (YIGM…DNIL), and 232 to 252 (LAAG…ILLM).

It belongs to the steroid 5-alpha reductase family.

The protein localises to the endoplasmic reticulum membrane. This is an uncharacterized protein from Schizosaccharomyces pombe (strain 972 / ATCC 24843) (Fission yeast).